The chain runs to 168 residues: Photosystem I assembly protein Ycf3 (168 aa).

TPR repeat units lie at residues 35 to 68 (AFTYYRDGMSAQSEGNYAEALQNYYEAMRLEMDP), 72 to 105 (SYILYNIGLIHTSNGEHTKALEYYFRALERNPFL), and 120 to 153 (GEQAIRQGDSEIAEAWFDQAAEYWKQAIALTPGN).

It belongs to the Ycf3 family.

Its subcellular location is the plastid. The protein localises to the chloroplast thylakoid membrane. Functionally, essential for the assembly of the photosystem I (PSI) complex. May act as a chaperone-like factor to guide the assembly of the PSI subunits. This is Photosystem I assembly protein Ycf3 from Pelargonium hortorum (Common geranium).